The sequence spans 638 residues: CTTNBP2 N-terminal-like protein (638 aa).

Residues methionine 87–arginine 284 are a coiled coil. Disordered stretches follow at residues alanine 280–glutamate 303, arginine 360–serine 430, arginine 463–threonine 490, and asparagine 514–serine 621. Residue serine 285 is modified to Phosphoserine. A compositionally biased stretch (polar residues) spans arginine 360 to glutamine 371. Composition is skewed to low complexity over residues threonine 401 to serine 430 and glutamine 467 to serine 477. Residues serine 481, serine 488, serine 522, serine 526, serine 559, serine 562, and serine 567 each carry the phosphoserine modification. Over residues asparagine 514–phenylalanine 528 the composition is skewed to polar residues. Phosphothreonine occurs at positions 569 and 589. Positions threonine 589 to proline 620 are enriched in polar residues. At serine 591 the chain carries Phosphoserine.

Interacts with CTTN/cortactin; this interaction may redistribute CTTN to stress fibers. May form homomers. Associates with the core of STRIPAK complexes composed of PP2A catalytic and scaffolding subunits, the striatins (PP2A regulatory subunits), the striatin-associated proteins MOB4, STRIP1 and STRIP2, PDCD10 and members of the STE20 kinases, such as STK24 and STK26. In terms of tissue distribution, predominantly expressed in skin, also detectable in spleen and lung (at protein level). Very low levels, if any, in brain (at protein level).

The protein localises to the cell projection. Its subcellular location is the lamellipodium. It localises to the cytoplasm. It is found in the cytoskeleton. The protein resides in the stress fiber. Functionally, regulates lamellipodial actin dynamics in a CTTN-dependent manner. Associates with core striatin-interacting phosphatase and kinase (STRIPAK) complex to form CTTNBP2NL-STRIPAK complexes. STRIPAK complexes have critical roles in protein (de)phosphorylation and are regulators of multiple signaling pathways including Hippo, MAPK, nuclear receptor and cytoskeleton remodeling. Different types of STRIPAK complexes are involved in a variety of biological processes such as cell growth, differentiation, apoptosis, metabolism and immune regulation. In Mus musculus (Mouse), this protein is CTTNBP2 N-terminal-like protein (Cttnbp2nl).